Here is a 502-residue protein sequence, read N- to C-terminus: Ubiquitin-associated protein 1 (502 aa).

The tract at residues 1–95 is interaction with ESCRT-I; the sequence is MASKKLGTDV…AEAKVNSKSG (95 aa). In terms of domain architecture, UMA spans 17-63; the sequence is LDDVPFKIGDKFKTPAKVGLPIGFSLPDCLQVVREMQYDFSLEKKTI. The segment covering 80-100 has biased composition (basic and acidic residues); sequence ERKAEEAEAKVNSKSGPEGDS. 2 disordered regions span residues 80-117 and 135-156; these read ERKA…PPPI and VSSS…DFNP. Ser146, Ser205, and Ser289 each carry phosphoserine. The segment at 260-290 is interaction with PTPN23; that stretch reads VSNIKSLSFPKLDSDDSNQKTVKLASTFHST. UBA domains follow at residues 389–430 and 451–498; these read SPSE…LFAH and QCSE…LMAR.

In terms of assembly, component of an ESCRT-I complex (endosomal sorting complex required for transport I) which consists of TSG101, VPS28, VPS37A and UBAP1 in a 1:1:1:1 stoichiometry. Interacts with PTPN23. Interacts (via UBA domains) with ubiquitinated proteins. Ubiquitous. Highly expressed in heart, liver, brain, kidney, spleen, skeletal muscle, stomach, testis and lung.

It is found in the cytoplasm. The protein resides in the cytosol. The protein localises to the endosome. In terms of biological role, component of the ESCRT-I complex, a regulator of vesicular trafficking process. Binds to ubiquitinated cargo proteins and is required for the sorting of endocytic ubiquitinated cargos into multivesicular bodies (MVBs). Plays a role in the proteasomal degradation of ubiquitinated cell-surface proteins, such as EGFR and BST2. This is Ubiquitin-associated protein 1 from Mus musculus (Mouse).